A 434-amino-acid chain; its full sequence is A-adding tRNA nucleotidyltransferase (434 aa).

Position 20 to 23 (20 to 23) interacts with ATP; that stretch reads GAVR. Residues Asp33 and Asp35 each coordinate Mg(2+). ATP contacts are provided by residues 91–92, Asn96, 132–141, and Arg177; these read RD and DPLRAWRAAR. Residues 227-339 form the HD domain; sequence VFEHGVEALH…ELLPDLLSLM (113 aa).

This sequence belongs to the tRNA nucleotidyltransferase/poly(A) polymerase family. Mg(2+) is required as a cofactor.

It catalyses the reaction a tRNA with a 3' CC end + ATP = a tRNA with a 3' CCA end + diphosphate. TRNA nucleotidyltransferase involved in the synthesis of the tRNA CCA terminus. Adds the terminal adenosine residue to tRNA. This is A-adding tRNA nucleotidyltransferase from Deinococcus radiodurans (strain ATCC 13939 / DSM 20539 / JCM 16871 / CCUG 27074 / LMG 4051 / NBRC 15346 / NCIMB 9279 / VKM B-1422 / R1).